A 60-amino-acid chain; its full sequence is Cytotoxin 5 (60 aa).

4 cysteine pairs are disulfide-bonded: Cys3/Cys21, Cys14/Cys38, Cys42/Cys53, and Cys54/Cys59.

It belongs to the three-finger toxin family. Short-chain subfamily. Type IA cytotoxin sub-subfamily. Monomer in solution; Homodimer and oligomer in the presence of negatively charged lipids forming a pore with a size ranging between 20 and 30 Angstroms. In terms of tissue distribution, expressed by the venom gland.

Its subcellular location is the secreted. It localises to the target cell membrane. Its function is as follows. Shows cytolytic activity on many different cells by forming pore in lipid membranes. In vivo, increases heart rate or kills the animal by cardiac arrest. In addition, it binds to heparin with high affinity, interacts with Kv channel-interacting protein 1 (KCNIP1) in a calcium-independent manner, and binds to integrin alpha-V/beta-3 (ITGAV/ITGB3) with moderate affinity. This is Cytotoxin 5 from Naja mossambica (Mozambique spitting cobra).